The primary structure comprises 248 residues: Ribosomal RNA small subunit methyltransferase J (248 aa).

S-adenosyl-L-methionine-binding positions include 98–99 (RD), 114–115 (ER), 150–151 (SS), and aspartate 168.

This sequence belongs to the methyltransferase superfamily. RsmJ family.

It localises to the cytoplasm. The catalysed reaction is guanosine(1516) in 16S rRNA + S-adenosyl-L-methionine = N(2)-methylguanosine(1516) in 16S rRNA + S-adenosyl-L-homocysteine + H(+). Functionally, specifically methylates the guanosine in position 1516 of 16S rRNA. The chain is Ribosomal RNA small subunit methyltransferase J from Shewanella denitrificans (strain OS217 / ATCC BAA-1090 / DSM 15013).